The following is a 409-amino-acid chain: MTQTNFRSGPDANGLFGSFGGRYVAETLMPLVLDLNREYEAAKADPEFIKEMAYFQRDYIGRPNPLYFAERLTEFCGGAKIYFKREELNHTGAHKINNCIGQVLLAKRMGKKRLIAETGAGMHGVATATVAARFGLPCVIYMGATDIERQQANVFRMKLLGAEIVPVTSGTGTLKDAMNEALRDWVTNVDDTFYLIGTVAGPHPYPAMVRDFQSVIGKETKEQMQEKEGRLPDSLIACVGGGSNAMGLFHPFLDDASVEIIGVEAGGHGVDTDKHAASLNGGVPGVLHGNRTYLLQDNDGQITDAHSISAGLDYPGIGPEHAYLHEVKRVEYVSITDEEALDAFHQCCLLEGIIPALETAHALAEAMKRATNLRDDHLMVVCLSGRGDKDMQTVMNHMAAADNTQEKLV.

Lysine 95 carries the N6-(pyridoxal phosphate)lysine modification.

Belongs to the TrpB family. Tetramer of two alpha and two beta chains. Pyridoxal 5'-phosphate serves as cofactor.

It carries out the reaction (1S,2R)-1-C-(indol-3-yl)glycerol 3-phosphate + L-serine = D-glyceraldehyde 3-phosphate + L-tryptophan + H2O. Its pathway is amino-acid biosynthesis; L-tryptophan biosynthesis; L-tryptophan from chorismate: step 5/5. The beta subunit is responsible for the synthesis of L-tryptophan from indole and L-serine. This chain is Tryptophan synthase beta chain, found in Pseudomonas syringae pv. tomato (strain ATCC BAA-871 / DC3000).